Here is a 180-residue protein sequence, read N- to C-terminus: Ribosome maturation factor RimM (180 aa).

The PRC barrel domain maps to 104-177 (PEEFHDHQLV…RVVVDPPGGL (74 aa)).

The protein belongs to the RimM family. In terms of assembly, binds ribosomal protein uS19.

It is found in the cytoplasm. Functionally, an accessory protein needed during the final step in the assembly of 30S ribosomal subunit, possibly for assembly of the head region. Essential for efficient processing of 16S rRNA. May be needed both before and after RbfA during the maturation of 16S rRNA. It has affinity for free ribosomal 30S subunits but not for 70S ribosomes. The polypeptide is Ribosome maturation factor RimM (Salinispora arenicola (strain CNS-205)).